The chain runs to 153 residues: Actin-related protein 2/3 complex subunit 5-like protein (153 aa).

Phosphoserine is present on Ser-64.

This sequence belongs to the ARPC5 family. As to quaternary structure, may be a component of the Arp2/3 complex in which it may replace ARPC5.

Its subcellular location is the cytoplasm. The protein localises to the cytoskeleton. It is found in the cell projection. Functionally, may function as component of the Arp2/3 complex which is involved in regulation of actin polymerization and together with an activating nucleation-promoting factor (NPF) mediates the formation of branched actin networks. The protein is Actin-related protein 2/3 complex subunit 5-like protein (ARPC5L) of Bos taurus (Bovine).